Consider the following 119-residue polypeptide: Large ribosomal subunit protein uL18 (119 aa).

The protein belongs to the universal ribosomal protein uL18 family. As to quaternary structure, part of the 50S ribosomal subunit; part of the 5S rRNA/L5/L18/L25 subcomplex. Contacts the 5S and 23S rRNAs.

In terms of biological role, this is one of the proteins that bind and probably mediate the attachment of the 5S RNA into the large ribosomal subunit, where it forms part of the central protuberance. The protein is Large ribosomal subunit protein uL18 of Nitrosomonas europaea (strain ATCC 19718 / CIP 103999 / KCTC 2705 / NBRC 14298).